A 291-amino-acid chain; its full sequence is Nucleotide-binding protein LMHCC_0126 (291 aa).

Position 13–20 (13–20) interacts with ATP; sequence GMSGAGKT. 63 to 66 is a GTP binding site; sequence DLRG.

This sequence belongs to the RapZ-like family.

Functionally, displays ATPase and GTPase activities. This Listeria monocytogenes serotype 4a (strain HCC23) protein is Nucleotide-binding protein LMHCC_0126.